Reading from the N-terminus, the 189-residue chain is MSAKNDVTGKVIAIMGVSGAGKSTIGKMLGKALSCDFLDADDFHSLSNRDKMRQGIALSDEDRMPWLEKIQESLRKRLLDGETVVLACSSLRKQYREILRGSDPDYKPGSYTSCKVTFVLLEGNAEVIAARLQKRASEEEHFMPLTLLQSQFDLLQADECEKIFKISVVLSPEVIVNTILEMVANSLNP.

16 to 23 (GVSGAGKS) is an ATP binding site.

The protein belongs to the gluconokinase GntK/GntV family. Monomer.

The enzyme catalyses D-gluconate + ATP = 6-phospho-D-gluconate + ADP + H(+). Its pathway is carbohydrate acid metabolism; D-gluconate degradation. Its function is as follows. Phosphorylates gluconate to 6-phosphogluconate. This is Gluconokinase from Arabidopsis thaliana (Mouse-ear cress).